A 410-amino-acid polypeptide reads, in one-letter code: Porin-like protein GalP (410 aa).

The N-terminal stretch at 1-25 is a signal peptide; it reads MKCRTLYPLVPTFALAASLPLQALA.

This sequence belongs to the outer membrane porin (Opr) (TC 1.B.25) family.

Probable transporter, possibly involved in the gallate degradation pathway. May play a role in the uptake of low gallate concentrations that may exist in the natural habitats of P.putida. The protein is Porin-like protein GalP (galP) of Pseudomonas putida (strain ATCC 47054 / DSM 6125 / CFBP 8728 / NCIMB 11950 / KT2440).